Reading from the N-terminus, the 142-residue chain is Prefoldin subunit alpha (142 aa).

The protein belongs to the prefoldin subunit alpha family. Heterohexamer of two alpha and four beta subunits.

It localises to the cytoplasm. Its function is as follows. Molecular chaperone capable of stabilizing a range of proteins. Seems to fulfill an ATP-independent, HSP70-like function in archaeal de novo protein folding. In Methanosarcina acetivorans (strain ATCC 35395 / DSM 2834 / JCM 12185 / C2A), this protein is Prefoldin subunit alpha.